We begin with the raw amino-acid sequence, 232 residues long: Large ribosomal subunit protein uL1 (232 aa).

The protein belongs to the universal ribosomal protein uL1 family. In terms of assembly, part of the 50S ribosomal subunit.

In terms of biological role, binds directly to 23S rRNA. The L1 stalk is quite mobile in the ribosome, and is involved in E site tRNA release. Functionally, protein L1 is also a translational repressor protein, it controls the translation of the L11 operon by binding to its mRNA. This chain is Large ribosomal subunit protein uL1, found in Ruegeria sp. (strain TM1040) (Silicibacter sp.).